Consider the following 474-residue polypeptide: Adenosylhomocysteinase (474 aa).

Residues Thr61, Asp136, and Glu196 each coordinate substrate. 197 to 199 (TTT) provides a ligand contact to NAD(+). Positions 226 and 230 each coordinate substrate. Residues Asn231, 260 to 265 (GYGDVG), Glu283, Asn318, 339 to 341 (IGH), and Asn384 each bind NAD(+).

It belongs to the adenosylhomocysteinase family. The cofactor is NAD(+).

It is found in the cytoplasm. The enzyme catalyses S-adenosyl-L-homocysteine + H2O = L-homocysteine + adenosine. It functions in the pathway amino-acid biosynthesis; L-homocysteine biosynthesis; L-homocysteine from S-adenosyl-L-homocysteine: step 1/1. In terms of biological role, may play a key role in the regulation of the intracellular concentration of adenosylhomocysteine. The chain is Adenosylhomocysteinase from Ralstonia pickettii (strain 12J).